Here is a 530-residue protein sequence, read N- to C-terminus: Phosphoenolpyruvate carboxykinase (ATP) (530 aa).

Substrate is bound by residues Arg56, Tyr196, and Lys202. ATP contacts are provided by residues Lys202, His221, and 237 to 245 (GLSGTGKTT). The Mn(2+) site is built by Lys202 and His221. A Mn(2+)-binding site is contributed by Asp258. Residues Glu286, Arg322, 438-439 (RI), and Thr444 each bind ATP. Arg322 serves as a coordination point for substrate.

The protein belongs to the phosphoenolpyruvate carboxykinase (ATP) family. In terms of assembly, monomer. Mn(2+) is required as a cofactor.

It localises to the cytoplasm. It carries out the reaction oxaloacetate + ATP = phosphoenolpyruvate + ADP + CO2. Its pathway is carbohydrate biosynthesis; gluconeogenesis. Its function is as follows. Involved in the gluconeogenesis. Catalyzes the conversion of oxaloacetate (OAA) to phosphoenolpyruvate (PEP) through direct phosphoryl transfer between the nucleoside triphosphate and OAA. The sequence is that of Phosphoenolpyruvate carboxykinase (ATP) from Photobacterium profundum (strain SS9).